Consider the following 300-residue polypeptide: Ribosomal RNA small subunit methyltransferase H (300 aa).

Residues glycine 46–histidine 48, aspartate 65, phenylalanine 92, aspartate 107, and glutamine 114 each bind S-adenosyl-L-methionine.

Belongs to the methyltransferase superfamily. RsmH family.

It localises to the cytoplasm. It catalyses the reaction cytidine(1402) in 16S rRNA + S-adenosyl-L-methionine = N(4)-methylcytidine(1402) in 16S rRNA + S-adenosyl-L-homocysteine + H(+). Specifically methylates the N4 position of cytidine in position 1402 (C1402) of 16S rRNA. The polypeptide is Ribosomal RNA small subunit methyltransferase H (Prochlorococcus marinus (strain MIT 9215)).